Here is a 569-residue protein sequence, read N- to C-terminus: Amyloid-beta A4 precursor protein-binding family A member 3 (569 aa).

The residue at position 1 (M1) is an N-acetylmethionine. Disordered regions lie at residues M1–D53 and A124–E168. A compositionally biased stretch (basic and acidic residues) spans E19 to P32. Residues A132–P141 are compositionally biased toward low complexity. Phosphoserine is present on residues S166 and S367. Residues D212 to G376 enclose the PID domain. PDZ domains are found at residues E389–C475 and T480–A554.

Binds to the cytoplasmic domain of amyloid protein (APP). Interacts with HIF1AN (via N-terminus). Interacts with NECAB3; seems to mediate the interaction between NECAB3 and HIF1AN. As to expression, ubiquitous.

The protein resides in the cytoplasm. The protein localises to the perinuclear region. May modulate processing of the amyloid-beta precursor protein (APP) and hence formation of APP-beta. May enhance the activity of HIF1A in macrophages by inhibiting the activity of HIF1AN. The protein is Amyloid-beta A4 precursor protein-binding family A member 3 (Apba3) of Rattus norvegicus (Rat).